The chain runs to 299 residues: Homoserine kinase (299 aa).

Position 88-98 (88-98 (PLGRGLGSSAT)) interacts with ATP.

This sequence belongs to the GHMP kinase family. Homoserine kinase subfamily.

The protein resides in the cytoplasm. The enzyme catalyses L-homoserine + ATP = O-phospho-L-homoserine + ADP + H(+). It participates in amino-acid biosynthesis; L-threonine biosynthesis; L-threonine from L-aspartate: step 4/5. Its function is as follows. Catalyzes the ATP-dependent phosphorylation of L-homoserine to L-homoserine phosphate. The sequence is that of Homoserine kinase from Gloeobacter violaceus (strain ATCC 29082 / PCC 7421).